An 83-amino-acid polypeptide reads, in one-letter code: UPF0248 protein PH1212.1 (83 aa).

This sequence belongs to the UPF0248 family.

The protein is UPF0248 protein PH1212.1 of Pyrococcus horikoshii (strain ATCC 700860 / DSM 12428 / JCM 9974 / NBRC 100139 / OT-3).